A 235-amino-acid chain; its full sequence is uncharacterized protein (235 aa).

The next 7 membrane-spanning stretches (helical) occupy residues V2 to L22, M34 to A54, L56 to E76, F102 to G122, M147 to I167, I178 to L198, and M210 to W230.

Its subcellular location is the cell membrane. This is an uncharacterized protein from Escherichia coli (strain K12).